Here is a 295-residue protein sequence, read N- to C-terminus: MRNRIEQALQQMPASFAPYLRELVLAKDFDATFSAEQYQQLLTLSGLEDADLRVALLPIAAAYSYAPISEFYVGAIVRGISGRLYLGANMEFTGAQLGQTVHAEQCAISHAWMKGEKGVADITINFSPCGHCRQFMNELTTASSLKIQLPKRAAKTLQEYLPESFGPADLGIDSGLMSPVNHGKTSDDDEELIQQALRAMNISHSPYTQNFSGVALKMRSGAIYLGAYAENAAFNPSLPPLQVALAQAMMMGESFEDIEAAALVESATGKISHLADTQATLEVINPDIPLSYLSL.

CMP/dCMP-type deaminase domains are found at residues 48 to 168 and 187 to 295; these read EDAD…FGPA and DDDE…YLSL. 89–91 lines the substrate pocket; sequence NME. Histidine 102 contributes to the Zn(2+) binding site. Glutamate 104 serves as the catalytic Proton donor. Zn(2+) contacts are provided by cysteine 129 and cysteine 132.

It belongs to the cytidine and deoxycytidylate deaminase family. As to quaternary structure, homodimer. Zn(2+) serves as cofactor.

It carries out the reaction cytidine + H2O + H(+) = uridine + NH4(+). It catalyses the reaction 2'-deoxycytidine + H2O + H(+) = 2'-deoxyuridine + NH4(+). Functionally, this enzyme scavenges exogenous and endogenous cytidine and 2'-deoxycytidine for UMP synthesis. The polypeptide is Cytidine deaminase (Vibrio cholerae serotype O1 (strain ATCC 39315 / El Tor Inaba N16961)).